A 243-amino-acid chain; its full sequence is tRNA pseudouridine synthase A (243 aa).

The Nucleophile role is filled by Asp-54. Position 112 (Tyr-112) interacts with substrate.

It belongs to the tRNA pseudouridine synthase TruA family. As to quaternary structure, homodimer.

The enzyme catalyses uridine(38/39/40) in tRNA = pseudouridine(38/39/40) in tRNA. Its function is as follows. Formation of pseudouridine at positions 38, 39 and 40 in the anticodon stem and loop of transfer RNAs. This Onion yellows phytoplasma (strain OY-M) protein is tRNA pseudouridine synthase A.